The chain runs to 576 residues: Alpha-bisabolol synthase (576 aa).

5 residues coordinate (2E,6E)-farnesyl diphosphate: arginine 286, aspartate 323, aspartate 327, arginine 466, and asparagine 469. Aspartate 323 and aspartate 327 together coordinate Mg(2+). Residues 323–327 (DDVYD) carry the DDXXD motif motif. Positions 469, 473, and 477 each coordinate Mg(2+).

The protein belongs to the terpene synthase family. Tpsb subfamily. It depends on Mg(2+) as a cofactor. Mn(2+) is required as a cofactor.

Functionally, produces a mixture of beta-bisabolene and alpha-bisabolol, along with traces of alpha-bisabolene and farnesene isomers from (2E,6E)-farnesyl diphosphate in fragrance biosynthesis. In Santalum spicatum (Australian sandalwood), this protein is Alpha-bisabolol synthase.